A 219-amino-acid chain; its full sequence is Proteasome subunit beta type-9 (219 aa).

A propeptide spans 1-20 (MLRTGAPNGDLPRAGEVHTG) (removed in mature form). Thr-21 (nucleophile) is an active-site residue. 2 positions are modified to N6-acetyllysine: Lys-53 and Lys-109.

It belongs to the peptidase T1B family. In terms of assembly, the 26S proteasome consists of a 20S proteasome core and two 19S regulatory subunits. The 20S proteasome core is composed of 28 subunits that are arranged in four stacked rings, resulting in a barrel-shaped structure. The two end rings are each formed by seven alpha subunits, and the two central rings are each formed by seven beta subunits. The catalytic chamber with the active sites is on the inside of the barrel. Component of the immunoproteasome, where it displaces the equivalent housekeeping subunit PSMB6. Component of the spermatoproteasome, a form of the proteasome specifically found in testis. In terms of processing, autocleaved. The resulting N-terminal Thr residue of the mature subunit is responsible for the nucleophile proteolytic activity.

Its subcellular location is the cytoplasm. It localises to the nucleus. The catalysed reaction is Cleavage of peptide bonds with very broad specificity.. The proteasome is a multicatalytic proteinase complex which is characterized by its ability to cleave peptides with Arg, Phe, Tyr, Leu, and Glu adjacent to the leaving group at neutral or slightly basic pH. The proteasome has an ATP-dependent proteolytic activity. This subunit is involved in antigen processing to generate class I binding peptides. The polypeptide is Proteasome subunit beta type-9 (PSMB9) (Bos taurus (Bovine)).